We begin with the raw amino-acid sequence, 138 residues long: Translation initiation factor 5A (138 aa).

Residue K37 is modified to Hypusine.

It belongs to the eIF-5A family.

Its subcellular location is the cytoplasm. In terms of biological role, functions by promoting the formation of the first peptide bond. This is Translation initiation factor 5A (eIF5A) from Thermococcus sibiricus (strain DSM 12597 / MM 739).